The following is a 252-amino-acid chain: Probable transcriptional regulatory protein Lxx10750 (252 aa).

It belongs to the TACO1 family.

Its subcellular location is the cytoplasm. The protein is Probable transcriptional regulatory protein Lxx10750 of Leifsonia xyli subsp. xyli (strain CTCB07).